A 440-amino-acid polypeptide reads, in one-letter code: 3-phosphoshikimate 1-carboxyvinyltransferase (440 aa).

K19, S20, and R24 together coordinate 3-phosphoshikimate. Phosphoenolpyruvate is bound at residue K19. Phosphoenolpyruvate is bound by residues G92 and R121. Residues S166, Q168, D315, and K342 each contribute to the 3-phosphoshikimate site. Q168 provides a ligand contact to phosphoenolpyruvate. The Proton acceptor role is filled by D315. The phosphoenolpyruvate site is built by R346 and R399.

Belongs to the EPSP synthase family. In terms of assembly, monomer.

The protein resides in the cytoplasm. The enzyme catalyses 3-phosphoshikimate + phosphoenolpyruvate = 5-O-(1-carboxyvinyl)-3-phosphoshikimate + phosphate. Its pathway is metabolic intermediate biosynthesis; chorismate biosynthesis; chorismate from D-erythrose 4-phosphate and phosphoenolpyruvate: step 6/7. Its function is as follows. Catalyzes the transfer of the enolpyruvyl moiety of phosphoenolpyruvate (PEP) to the 5-hydroxyl of shikimate-3-phosphate (S3P) to produce enolpyruvyl shikimate-3-phosphate and inorganic phosphate. The sequence is that of 3-phosphoshikimate 1-carboxyvinyltransferase from Leptospira interrogans serogroup Icterohaemorrhagiae serovar copenhageni (strain Fiocruz L1-130).